A 66-amino-acid chain; its full sequence is Dermaseptin PD-3-7 (66 aa).

An N-terminal signal peptide occupies residues 1-22 (MSFMKKSLLLVLFLGVVSLSNC). Residues 23–40 (EEEKGENENEDHEEHHEE) constitute a propeptide that is removed on maturation.

As to expression, expressed by the skin glands.

It localises to the secreted. In terms of biological role, possesses a potent antimicrobial activity against Gram-positive and Gram-negative bacteria. Probably acts by disturbing membrane functions with its amphipathic structure. The sequence is that of Dermaseptin PD-3-7 from Agalychnis dacnicolor (Giant Mexican leaf frog).